The sequence spans 454 residues: tRNA modification GTPase MnmE (454 aa).

Residues R23, E80, and K120 each contribute to the (6S)-5-formyl-5,6,7,8-tetrahydrofolate site. One can recognise a TrmE-type G domain in the interval 216-377 (GMKVVIAGRP…LRNNLKQSMG (162 aa)). Residue N226 participates in K(+) binding. GTP contacts are provided by residues 226 to 231 (NAGKSS), 245 to 251 (TDIAGTT), 270 to 273 (DTAG), 335 to 338 (NKAD), and 358 to 360 (SAR). S230 serves as a coordination point for Mg(2+). The K(+) site is built by T245, I247, and T250. T251 serves as a coordination point for Mg(2+). Position 454 (K454) interacts with (6S)-5-formyl-5,6,7,8-tetrahydrofolate.

The protein belongs to the TRAFAC class TrmE-Era-EngA-EngB-Septin-like GTPase superfamily. TrmE GTPase family. In terms of assembly, homodimer. Heterotetramer of two MnmE and two MnmG subunits. The cofactor is K(+).

Its subcellular location is the cytoplasm. Exhibits a very high intrinsic GTPase hydrolysis rate. Involved in the addition of a carboxymethylaminomethyl (cmnm) group at the wobble position (U34) of certain tRNAs, forming tRNA-cmnm(5)s(2)U34. The chain is tRNA modification GTPase MnmE from Salmonella paratyphi A (strain ATCC 9150 / SARB42).